A 659-amino-acid polypeptide reads, in one-letter code: RNA polymerase II subunit A C-terminal domain phosphatase (659 aa).

An FCP1 homology domain is found at 139–303 (ITNRKLVLLV…KNSKEQMPVQ (165 aa)). The 93-residue stretch at 351-443 (ERHKVLDGCV…LKADENLFQL (93 aa)) folds into the BRCT domain. A compositionally biased stretch (acidic residues) spans 484 to 504 (ALSDDEDDGDNEDEDDDGNDV). Positions 484–640 (ALSDDEDDGD…PESDDDDEFE (157 aa)) are disordered. Positions 505-519 (GEDKGDENLEEKQEK) are enriched in basic and acidic residues. Residues 529-538 (QNGSVENQSG) show a composition bias toward polar residues. Acidic residues-rich tracts occupy residues 560–576 (MEDEEEESDSDNEDDDT), 596–607 (ENEDDAVFDVDD), and 616–640 (IDEEEDDEDNEDEEVPESDDDDEFE).

It is found in the nucleus. It carries out the reaction O-phospho-L-seryl-[protein] + H2O = L-seryl-[protein] + phosphate. The catalysed reaction is O-phospho-L-threonyl-[protein] + H2O = L-threonyl-[protein] + phosphate. Its function is as follows. During the late stages of oogenesis, dephosphorylates 'Ser-5' of the heptad repeats YSPTSPS in the C-terminal domain of the largest RNA polymerase II subunit ama-1. Similarly, dephosphorylates 'Ser-5' of ama-1 in early embryonic cells prior to the activation of the zygotic transcription program at the 4-cell embryonic stage. May dephosphorylate 'Ser-2' of the ama-1 heptad repeats YSPTSPS in embryonic somatic and germline cells. This chain is RNA polymerase II subunit A C-terminal domain phosphatase, found in Caenorhabditis elegans.